A 194-amino-acid polypeptide reads, in one-letter code: Dephospho-CoA kinase (194 aa).

A DPCK domain is found at 4-194 (VIGLTGSIGM…VKEILQKLGA (191 aa)). 12 to 17 (GMGKTT) contributes to the ATP binding site.

This sequence belongs to the CoaE family.

It localises to the cytoplasm. The catalysed reaction is 3'-dephospho-CoA + ATP = ADP + CoA + H(+). Its pathway is cofactor biosynthesis; coenzyme A biosynthesis; CoA from (R)-pantothenate: step 5/5. Functionally, catalyzes the phosphorylation of the 3'-hydroxyl group of dephosphocoenzyme A to form coenzyme A. This Agrobacterium fabrum (strain C58 / ATCC 33970) (Agrobacterium tumefaciens (strain C58)) protein is Dephospho-CoA kinase.